An 86-amino-acid polypeptide reads, in one-letter code: F(1)-ATPase inhibitor STF1, mitochondrial (86 aa).

The N-terminal 23 residues, 1–23 (MLNRCISRNTRLPVNLRIASRFY), are a transit peptide targeting the mitochondrion. S24 bears the Phosphoserine mark.

The protein belongs to the ATPase inhibitor family. As to quaternary structure, monomer and homodimer. Monomeric at pH 5.0 and dimeric at either pH 6.5 or 8.0. The protein aggregates increasingly strongly with increasing pH.

It localises to the mitochondrion. In terms of biological role, endogenous low-affinity ATPase inhibitor, which inhibits specifically the reverse ATPase reaction of mitochondrial F(1)F(0)-type ATP synthase. Found to stabilize, together with STF2, a complex of intrinsic ATPase inhibitor INH1 and proton-translocating ATPase in mitochondrial membranes. Binds directly to purified F1-ATPase. This chain is F(1)-ATPase inhibitor STF1, mitochondrial (STF1), found in Saccharomyces cerevisiae (strain ATCC 204508 / S288c) (Baker's yeast).